The following is a 383-amino-acid chain: Glucose-1-phosphate adenylyltransferase (383 aa).

Alpha-D-glucose 1-phosphate is bound by residues Tyr99, Gly164, 179–180 (EK), and Ser190.

This sequence belongs to the bacterial/plant glucose-1-phosphate adenylyltransferase family. Homotetramer.

The catalysed reaction is alpha-D-glucose 1-phosphate + ATP + H(+) = ADP-alpha-D-glucose + diphosphate. Its pathway is glycan biosynthesis; glycogen biosynthesis. In terms of biological role, involved in the biosynthesis of ADP-glucose, a building block required for the elongation reactions to produce glycogen. Catalyzes the reaction between ATP and alpha-D-glucose 1-phosphate (G1P) to produce pyrophosphate and ADP-Glc. This is Glucose-1-phosphate adenylyltransferase from Halalkalibacterium halodurans (strain ATCC BAA-125 / DSM 18197 / FERM 7344 / JCM 9153 / C-125) (Bacillus halodurans).